A 1457-amino-acid chain; its full sequence is NBPF family member NBPF12 (1457 aa).

The stretch at 75–119 (RQFKEEKLAEQLKQAEELRQYKVLVHSQERELTQLREKLREGRDA) forms a coiled coil. Residues 162–200 (LSPENDEDEDEDVQVEEDEKVLESSAPREVQKAEESKVP) are disordered. Residues 165 to 181 (ENDEDEDEDVQVEEDEK) are compositionally biased toward acidic residues. Residues 165 to 259 (ENDEDEDEDV…ECQDALNILP (95 aa)) form the Olduvai 1 domain. The span at 190-200 (EVQKAEESKVP) shows a compositional bias: basic and acidic residues. The stretch at 339 to 390 (KSMLRNELQFKEEKLAEQLKQAEELRQYKVLVHSQERELTQLREKLREGRDA) forms a coiled coil. Residues 432-472 (KLSPENDEDEDEDVQVEEDEKVLESSSPREMQKAEESKVPE) are disordered. The span at 436-452 (ENDEDEDEDVQVEEDEK) shows a compositional bias: acidic residues. Positions 436–530 (ENDEDEDEDV…ECQDALNILP (95 aa)) constitute an Olduvai 2 domain. Basic and acidic residues predominate over residues 461-472 (EMQKAEESKVPE). A coiled-coil region spans residues 610 to 661 (KSMLRNELQFKEEKLAEQLKQAEELRQYKVLVHSQERELTQLREKLREGRDA). Olduvai domains follow at residues 707 to 799 (ENDN…HIIP), 800 to 871 (ENES…VDIG), 872 to 963 (RHRW…PSCP), 966 to 1021 (SREL…LDVD), 1022 to 1114 (RIKK…RSKK), 1115 to 1207 (KRRR…PSCP), 1210 to 1265 (SREL…LDVD), 1266 to 1358 (RIKK…RSKK), and 1359 to 1457 (KRRR…IFPQ). Disordered stretches follow at residues 721–746 (AEKV…EDSL) and 791–838 (WEDA…GYST). 2 stretches are compositionally biased toward acidic residues: residues 801-810 (NESDDEEEEE) and 821-833 (ESEE…ESWD). The disordered stretch occupies residues 1100–1139 (KKGKGKKRRGRRSKKKRRRGRKEGEEDQNPPCPRLSRELL). The segment covering 1102-1120 (GKGKKRRGRRSKKKRRRGR) has biased composition (basic residues). The disordered stretch occupies residues 1344–1378 (KKGKGKKRRGRRSKKKRRRGRKEGEEDQNPPCPRL). Positions 1346 to 1364 (GKGKKRRGRRSKKKRRRGR) are enriched in basic residues.

The protein belongs to the NBPF family. Widely expressed with highest levels in brain, ovary, mammary gland, skin and adipose tissue. Also expressed in testis. Detected in a number of tumors including osteosarcoma, mammary carcinoma and hepatocellular carcinoma.

The protein localises to the cytoplasm. This chain is NBPF family member NBPF12, found in Homo sapiens (Human).